A 337-amino-acid polypeptide reads, in one-letter code: Holliday junction branch migration complex subunit RuvB (337 aa).

A large ATPase domain (RuvB-L) region spans residues 4-186; sequence ADRLIHPQII…FGIPLRLEFY (183 aa). ATP contacts are provided by residues R26, G67, K70, T71, T72, 133–135, R176, Y186, and R223; that span reads EDY. Position 71 (T71) interacts with Mg(2+). The interval 187–257 is small ATPAse domain (RuvB-S); sequence NVKDLSSIVA…IAEAALDMLD (71 aa). The interval 260 to 337 is head domain (RuvB-H); sequence AEGFDYMDRK…NHFNIIKPDA (78 aa). DNA is bound by residues R296, R315, and R320.

This sequence belongs to the RuvB family. In terms of assembly, homohexamer. Forms an RuvA(8)-RuvB(12)-Holliday junction (HJ) complex. HJ DNA is sandwiched between 2 RuvA tetramers; dsDNA enters through RuvA and exits via RuvB. An RuvB hexamer assembles on each DNA strand where it exits the tetramer. Each RuvB hexamer is contacted by two RuvA subunits (via domain III) on 2 adjacent RuvB subunits; this complex drives branch migration. In the full resolvosome a probable DNA-RuvA(4)-RuvB(12)-RuvC(2) complex forms which resolves the HJ.

The protein resides in the cytoplasm. It carries out the reaction ATP + H2O = ADP + phosphate + H(+). The RuvA-RuvB-RuvC complex processes Holliday junction (HJ) DNA during genetic recombination and DNA repair, while the RuvA-RuvB complex plays an important role in the rescue of blocked DNA replication forks via replication fork reversal (RFR). RuvA specifically binds to HJ cruciform DNA, conferring on it an open structure. The RuvB hexamer acts as an ATP-dependent pump, pulling dsDNA into and through the RuvAB complex. RuvB forms 2 homohexamers on either side of HJ DNA bound by 1 or 2 RuvA tetramers; 4 subunits per hexamer contact DNA at a time. Coordinated motions by a converter formed by DNA-disengaged RuvB subunits stimulates ATP hydrolysis and nucleotide exchange. Immobilization of the converter enables RuvB to convert the ATP-contained energy into a lever motion, pulling 2 nucleotides of DNA out of the RuvA tetramer per ATP hydrolyzed, thus driving DNA branch migration. The RuvB motors rotate together with the DNA substrate, which together with the progressing nucleotide cycle form the mechanistic basis for DNA recombination by continuous HJ branch migration. Branch migration allows RuvC to scan DNA until it finds its consensus sequence, where it cleaves and resolves cruciform DNA. The protein is Holliday junction branch migration complex subunit RuvB of Shewanella halifaxensis (strain HAW-EB4).